Here is a 614-residue protein sequence, read N- to C-terminus: Dihydroxy-acid dehydratase (614 aa).

Residue aspartate 81 participates in Mg(2+) binding. Position 122 (cysteine 122) interacts with [2Fe-2S] cluster. Aspartate 123 and lysine 124 together coordinate Mg(2+). The residue at position 124 (lysine 124) is an N6-carboxylysine. Cysteine 195 is a [2Fe-2S] cluster binding site. Glutamate 491 contacts Mg(2+). The active-site Proton acceptor is the serine 517.

This sequence belongs to the IlvD/Edd family. As to quaternary structure, homodimer. [2Fe-2S] cluster serves as cofactor. The cofactor is Mg(2+).

It catalyses the reaction (2R)-2,3-dihydroxy-3-methylbutanoate = 3-methyl-2-oxobutanoate + H2O. It carries out the reaction (2R,3R)-2,3-dihydroxy-3-methylpentanoate = (S)-3-methyl-2-oxopentanoate + H2O. It functions in the pathway amino-acid biosynthesis; L-isoleucine biosynthesis; L-isoleucine from 2-oxobutanoate: step 3/4. It participates in amino-acid biosynthesis; L-valine biosynthesis; L-valine from pyruvate: step 3/4. Functions in the biosynthesis of branched-chain amino acids. Catalyzes the dehydration of (2R,3R)-2,3-dihydroxy-3-methylpentanoate (2,3-dihydroxy-3-methylvalerate) into 2-oxo-3-methylpentanoate (2-oxo-3-methylvalerate) and of (2R)-2,3-dihydroxy-3-methylbutanoate (2,3-dihydroxyisovalerate) into 2-oxo-3-methylbutanoate (2-oxoisovalerate), the penultimate precursor to L-isoleucine and L-valine, respectively. The chain is Dihydroxy-acid dehydratase from Actinobacillus succinogenes (strain ATCC 55618 / DSM 22257 / CCUG 43843 / 130Z).